The following is a 491-amino-acid chain: Anthranilate synthase component 1 (491 aa).

L-tryptophan is bound by residues Ser-49 and 271–273; that span reads PYL. 306–307 is a chorismate binding site; that stretch reads GT. Glu-333 lines the Mg(2+) pocket. Residues Tyr-421, Arg-441, 455 to 457, and Gly-457 contribute to the chorismate site; that span reads GAG. Mg(2+) is bound at residue Glu-470.

It belongs to the anthranilate synthase component I family. As to quaternary structure, heterotetramer consisting of two non-identical subunits: a beta subunit (TrpG) and a large alpha subunit (TrpE). Mg(2+) is required as a cofactor.

The enzyme catalyses chorismate + L-glutamine = anthranilate + pyruvate + L-glutamate + H(+). It functions in the pathway amino-acid biosynthesis; L-tryptophan biosynthesis; L-tryptophan from chorismate: step 1/5. With respect to regulation, feedback inhibited by tryptophan. In terms of biological role, part of a heterotetrameric complex that catalyzes the two-step biosynthesis of anthranilate, an intermediate in the biosynthesis of L-tryptophan. In the first step, the glutamine-binding beta subunit (TrpG) of anthranilate synthase (AS) provides the glutamine amidotransferase activity which generates ammonia as a substrate that, along with chorismate, is used in the second step, catalyzed by the large alpha subunit of AS (TrpE) to produce anthranilate. In the absence of TrpG, TrpE can synthesize anthranilate directly from chorismate and high concentrations of ammonia. The polypeptide is Anthranilate synthase component 1 (trpE) (Neisseria meningitidis serogroup C / serotype 2a (strain ATCC 700532 / DSM 15464 / FAM18)).